The following is a 418-amino-acid chain: Putative ion-transport protein YfeO (418 aa).

Helical transmembrane passes span 10 to 30 (LLLS…LIVV), 54 to 74 (DSPF…GLVI), 99 to 119 (ALPG…SLGP), 120 to 140 (EHPI…RLLP), 149 to 169 (ILAS…AALI), 186 to 206 (LFAP…FFHP), 223 to 243 (ILSG…AVWC), 258 to 278 (VLML…AGPV), 300 to 320 (DYFL…ASGF), 322 to 342 (GGRI…LHEH), 343 to 363 (VPAV…VLVV), and 371 to 391 (LFMA…CIVM).

This sequence belongs to the chloride channel (TC 2.A.49) family.

Its subcellular location is the cell membrane. In Escherichia coli (strain SMS-3-5 / SECEC), this protein is Putative ion-transport protein YfeO.